The following is a 615-amino-acid chain: 3-(3-hydroxy-phenyl)propionate/3-hydroxycinnamic acid hydroxylase 1 (615 aa).

The interval 1–20 is disordered; the sequence is MRPAFEPAAGLGRAHPHETT. Residues 27-56 and 294-304 each bind FAD; these read DVAI…VVEK and FRVKRILLAGD.

This sequence belongs to the PheA/TfdB FAD monooxygenase family. Requires FAD as cofactor.

The enzyme catalyses 3-(3-hydroxyphenyl)propanoate + NADH + O2 + H(+) = 3-(2,3-dihydroxyphenyl)propanoate + NAD(+) + H2O. It carries out the reaction (2E)-3-(3-hydroxyphenyl)prop-2-enoate + NADH + O2 + H(+) = (2E)-3-(2,3-dihydroxyphenyl)prop-2-enoate + NAD(+) + H2O. The protein operates within aromatic compound metabolism; 3-phenylpropanoate degradation. Catalyzes the insertion of one atom of molecular oxygen into position 2 of the phenyl ring of 3-(3-hydroxyphenyl)propionate (3-HPP) and hydroxycinnamic acid (3HCI). This Burkholderia vietnamiensis (strain G4 / LMG 22486) (Burkholderia cepacia (strain R1808)) protein is 3-(3-hydroxy-phenyl)propionate/3-hydroxycinnamic acid hydroxylase 1.